A 41-amino-acid polypeptide reads, in one-letter code: Large ribosomal subunit protein bL36 (41 aa).

The tract at residues M1–R21 is disordered.

Belongs to the bacterial ribosomal protein bL36 family.

The polypeptide is Large ribosomal subunit protein bL36 (Methylobacterium sp. (strain 4-46)).